The primary structure comprises 554 residues: MPTINVNKIDLEKLINMSLSDKTIDHKFPMMGVEVEEIFEENNQKIVQFSINPDRPDYLSVEGLARGFRGFIGIDAGLPKYDIYASDLEVYVENVKSRPYCGFAIIKNIIIDDLVLESIINLQEKLHWSIGRDRKKMAIGIHDLDKIEAPFYYKEINGDEIEFEPLGHNELMTPKEVLEKHEKGVKYAHLLRGDKFPIIVDKNNAVISMPPIINGNLTKVGTETRNLLVEITGTDKNAVENTLNIIVCALADRRGTIFSLKLINNGNETISPDLTPDSAEITIDEINTRLGLNLNAGEIIACLKKARYDAQYSYEDENIKITIPAYRTDILNNMDIIKDVAINYGYENFNGNLPVVATIGEKHDIEKKFEFIRNTMIGYGLFEVMNLTLSNQDVLFNKMNENIEDNEYVEVLKPASIEHRVVRPTILPLLLETLANNKHNELPQKIFEVGDCVVIDEKDETLYTHCKNVPKVSAVITHHNANFNEIKGLVEGLIREMNIEYSIDNYKHPSFIEGRCAKIIVDDEIVGYFGELHPEVILNFELGYPVVGFEMEIK.

One can recognise a B5 domain in the interval 274 to 351 (LTPDSAEITI…INYGYENFNG (78 aa)). D329, D335, and D339 together coordinate Mg(2+).

It belongs to the phenylalanyl-tRNA synthetase beta subunit family. Type 2 subfamily. Tetramer of two alpha and two beta subunits. Mg(2+) is required as a cofactor.

The protein resides in the cytoplasm. It catalyses the reaction tRNA(Phe) + L-phenylalanine + ATP = L-phenylalanyl-tRNA(Phe) + AMP + diphosphate + H(+). The chain is Phenylalanine--tRNA ligase beta subunit from Methanococcus aeolicus (strain ATCC BAA-1280 / DSM 17508 / OCM 812 / Nankai-3).